Consider the following 315-residue polypeptide: MSDCQHQLKLFALNSNMKLAKEIAEVMGIELGKCSVSRFSDGEIQINIEESIRGDDVFVIQSTSVPVNEHLMELLIMIDALKRASARTINIVMPYYGYARQDRKARSRNPITAKLVANLLETAGASRVITLDLHAPQIQGFFDIPIDHLMGVPILADYFKSKQLEDIVVVSPDHGGVTRARKLADRLKAPIAIIDKRRPKPNVAEVMNIVGQVAGKTAILIDDIIDTAGTITLAANALAESGAKEVYACCTHPVLSGPAIERIQSSKIKELVVTNSIALPEEKKIDKIVKLSVRPLIAEAITRVYEMKSVSVLFD.

Residues 41–43 (DGE) and 100–101 (RQ) contribute to the ATP site. His-134 and Asp-173 together coordinate Mg(2+). The active site involves Lys-196. D-ribose 5-phosphate-binding positions include Arg-198, Asp-222, and 226–230 (DTAGT).

This sequence belongs to the ribose-phosphate pyrophosphokinase family. Class I subfamily. Homohexamer. Mg(2+) serves as cofactor.

It is found in the cytoplasm. The enzyme catalyses D-ribose 5-phosphate + ATP = 5-phospho-alpha-D-ribose 1-diphosphate + AMP + H(+). It participates in metabolic intermediate biosynthesis; 5-phospho-alpha-D-ribose 1-diphosphate biosynthesis; 5-phospho-alpha-D-ribose 1-diphosphate from D-ribose 5-phosphate (route I): step 1/1. Involved in the biosynthesis of the central metabolite phospho-alpha-D-ribosyl-1-pyrophosphate (PRPP) via the transfer of pyrophosphoryl group from ATP to 1-hydroxyl of ribose-5-phosphate (Rib-5-P). This Bacillus caldolyticus protein is Ribose-phosphate pyrophosphokinase.